A 567-amino-acid polypeptide reads, in one-letter code: Urease subunit alpha (567 aa).

The Urease domain occupies 129-567 (GGIDSHIHFI…LPLAQRYFLF (439 aa)). The Ni(2+) site is built by His134, His136, and Lys217. N6-carboxylysine is present on Lys217. Residue His219 participates in substrate binding. 2 residues coordinate Ni(2+): His246 and His272. His320 acts as the Proton donor in catalysis. Asp360 serves as a coordination point for Ni(2+).

This sequence belongs to the metallo-dependent hydrolases superfamily. Urease alpha subunit family. As to quaternary structure, heterotrimer of UreA (gamma), UreB (beta) and UreC (alpha) subunits. Three heterotrimers associate to form the active enzyme. It depends on Ni cation as a cofactor. Post-translationally, carboxylation allows a single lysine to coordinate two nickel ions.

Its subcellular location is the cytoplasm. The catalysed reaction is urea + 2 H2O + H(+) = hydrogencarbonate + 2 NH4(+). It participates in nitrogen metabolism; urea degradation; CO(2) and NH(3) from urea (urease route): step 1/1. The sequence is that of Urease subunit alpha from Pseudomonas entomophila (strain L48).